Reading from the N-terminus, the 506-residue chain is MAEADFKMVSEPVAHGVAEEEMASSTSDSGEESDSSSSSSSTSDSSSSSSTSGSSSGSGSSSSSSGSTSSRSRLYRKKRVPEPSRRARRAPLGTNFVDRLPQAVRNRVQALRNIQDECDKVDTLFLKAIHDLERKYAELNKPLYDRRFQIINAEYEPTEEECEWNSEDEEFSSDEEVQDNTPSEMPPLEGEEEENPKENPEVKAEEKEVPKEIPEVKDEEKEVPKEIPEVKAEEKADSKDCMEATPEVKEDPKEVPQVKADDKEQPKATEAKARAAVRETHKRVPEERLQDSVDLKRARKGKPKREDPKGIPDYWLIVLKNVDKLGPMIQKYDEPILKFLSDVSLKFSKPGQPVSYTFEFHFLPNPYFRNEVLVKTYIIKAKPDHNDPFFSWGWEIEDCKGCKIDWRRGKDVTVTTTQSRTTATGEIEIQPRVVPNASFFNFFSPPEIPMIGKLEPREDAILDEDFEIGQILHDNVILKSIYYYTGEVNGTYYQFGKHYGNKKYRK.

Disordered regions lie at residues 1–95 (MAEA…LGTN) and 157–307 (PTEE…KRED). Over residues 35–70 (SSSSSSSTSDSSSSSSTSGSSSGSGSSSSSSGSTSS) the composition is skewed to low complexity. Positions 157–178 (PTEEECEWNSEDEEFSSDEEVQ) are enriched in acidic residues. Residues 196 to 296 (PKENPEVKAE…ERLQDSVDLK (101 aa)) show a composition bias toward basic and acidic residues.

The protein belongs to the nucleosome assembly protein (NAP) family.

It is found in the nucleus. The polypeptide is Nucleosome assembly protein 1-like 3 (NAP1L3) (Homo sapiens (Human)).